The following is a 197-amino-acid chain: Potassium-transporting ATPase KdpC subunit (197 aa).

The helical transmembrane segment at 9-29 (LVVTLLLAALLCGAYPVLVTG) threads the bilayer.

Belongs to the KdpC family. In terms of assembly, the system is composed of three essential subunits: KdpA, KdpB and KdpC.

It is found in the cell inner membrane. Part of the high-affinity ATP-driven potassium transport (or Kdp) system, which catalyzes the hydrolysis of ATP coupled with the electrogenic transport of potassium into the cytoplasm. This subunit acts as a catalytic chaperone that increases the ATP-binding affinity of the ATP-hydrolyzing subunit KdpB by the formation of a transient KdpB/KdpC/ATP ternary complex. The sequence is that of Potassium-transporting ATPase KdpC subunit from Nitratidesulfovibrio vulgaris (strain DSM 19637 / Miyazaki F) (Desulfovibrio vulgaris).